A 118-amino-acid polypeptide reads, in one-letter code: Large ribosomal subunit protein uL18 (118 aa).

Belongs to the universal ribosomal protein uL18 family. As to quaternary structure, part of the 50S ribosomal subunit; part of the 5S rRNA/L5/L18/L25 subcomplex. Contacts the 5S and 23S rRNAs.

This is one of the proteins that bind and probably mediate the attachment of the 5S RNA into the large ribosomal subunit, where it forms part of the central protuberance. The chain is Large ribosomal subunit protein uL18 from Rickettsia felis (strain ATCC VR-1525 / URRWXCal2) (Rickettsia azadi).